The following is a 525-amino-acid chain: GMP synthase [glutamine-hydrolyzing] (525 aa).

The Glutamine amidotransferase type-1 domain occupies 9 to 207 (RILILDFGSQ…ILDICGCEAL (199 aa)). Cys-86 acts as the Nucleophile in catalysis. Active-site residues include His-181 and Glu-183. Residues 208–400 (WTPSKIAEDA…LGLPYDMVYR (193 aa)) form the GMPS ATP-PPase domain. 235-241 (SGGVDSS) is an ATP binding site.

As to quaternary structure, homodimer.

It catalyses the reaction XMP + L-glutamine + ATP + H2O = GMP + L-glutamate + AMP + diphosphate + 2 H(+). It functions in the pathway purine metabolism; GMP biosynthesis; GMP from XMP (L-Gln route): step 1/1. Its function is as follows. Catalyzes the synthesis of GMP from XMP. This chain is GMP synthase [glutamine-hydrolyzing], found in Pseudomonas syringae pv. syringae (strain B728a).